Reading from the N-terminus, the 356-residue chain is tRNA-specific 2-thiouridylase MnmA (356 aa).

Residues 6-13 (AMSGGVDS) and Leu-32 each bind ATP. Cys-101 functions as the Nucleophile in the catalytic mechanism. Cysteines 101 and 193 form a disulfide. Gly-125 is a binding site for ATP. The tract at residues 143–145 (KDQ) is interaction with tRNA. Catalysis depends on Cys-193, which acts as the Cysteine persulfide intermediate.

This sequence belongs to the MnmA/TRMU family.

The protein resides in the cytoplasm. It carries out the reaction S-sulfanyl-L-cysteinyl-[protein] + uridine(34) in tRNA + AH2 + ATP = 2-thiouridine(34) in tRNA + L-cysteinyl-[protein] + A + AMP + diphosphate + H(+). Catalyzes the 2-thiolation of uridine at the wobble position (U34) of tRNA, leading to the formation of s(2)U34. The chain is tRNA-specific 2-thiouridylase MnmA from Mycolicibacterium smegmatis (strain ATCC 700084 / mc(2)155) (Mycobacterium smegmatis).